A 2344-amino-acid polypeptide reads, in one-letter code: Genome polyprotein (2344 aa).

One can recognise an SF3 helicase domain in the interval 492–653 (QKVISDLHTM…ESWQATRHGS (162 aa)). An ATP-binding site is contributed by 522–529 (GAPGIGKT). An O-(5'-phospho-RNA)-tyrosine modification is found at Y1014. Y1014 is subject to O-UMP-tyrosine; transient. In terms of domain architecture, Peptidase C24 spans 1109–1244 (GLPGFMRHNG…SKMCTLIDLT (136 aa)). Residues H1135, D1152, and C1212 each act as for 3CLpro activity in the active site. One can recognise a RdRp catalytic domain in the interval 1495 to 1619 (SDFLCLDYSK…AMTPMMVSLL (125 aa)). C1584 and C1591 are disulfide-bonded. The segment at 1771-1794 (RTAPQGEAAGTATTASVPGTTTDG) is disordered. A compositionally biased stretch (low complexity) spans 1778–1794 (AAGTATTASVPGTTTDG).

As to quaternary structure, homodimer. Homomultimer. Interacts with host type II histo-blood group structures antigens at the surface of target cells. Mn(2+) is required as a cofactor. Specific enzymatic cleavages by its own cysteine protease yield mature proteins. The protease cleaves itself from the nascent polyprotein autocatalytically. Precursor p41 can be cleaved by viral 3CLpro into protein p19 and VPg, or cleaved by host protease into protein p23/2 and protein p18. Post-translationally, VPg is uridylylated by the polymerase and is covalently attached to the 5'-end of the polyadenylated genomic and subgenomic RNAs. This uridylylated form acts as a nucleotide-peptide primer for the polymerase.

The protein localises to the host cytoplasm. Its subcellular location is the host endoplasmic reticulum. It is found in the virion. It carries out the reaction a ribonucleoside 5'-triphosphate + H2O = a ribonucleoside 5'-diphosphate + phosphate + H(+). The enzyme catalyses Endopeptidase with a preference for cleavage when the P1 position is occupied by Glu-|-Xaa and the P1' position is occupied by Gly-|-Yaa.. The catalysed reaction is RNA(n) + a ribonucleoside 5'-triphosphate = RNA(n+1) + diphosphate. Together with NTPase and NS4, initiates the formation of the replication complex. Induces the proliferation of the host smooth ER membranes forming long tubular structures. These remodeled membranes probably form the viral factories that contain the replication complex. Functionally, displays NTPase activity, but no helicase activity. Induces the formation of convoluted membranes derived from the host ER. These remodeled membranes probably form the viral factories that contain the replication complex. Together with NS2 and NS4, initiates the formation of the replication complex. Its function is as follows. Probable key protein responsible for the formation of membrane alterations by the virus. Induces the formation of convoluted membranes derived from the host ER. These remodeled membranes probably form the viral factories that contain the replication complex. Together with NS2 and NTPase, initiates the formation of the replication complex. In terms of biological role, viral genome-linked protein is covalently linked to the 5'-end of the positive-strand, negative-strand genomic RNAs and subgenomic RNA. Acts as a genome-linked replication primer. May recruit ribosome to viral RNA thereby promoting viral proteins translation. Interacts with host translation initiation complex to allow the translation of viral proteins. Processes the polyprotein. 3CLpro-RdRp is first released by autocleavage, then all other proteins are cleaved. May cleave polyadenylate-binding protein thereby inhibiting cellular translation. Functionally, replicates genomic and antigenomic RNA by recognizing replications specific signals. Also transcribes a subgenomic mRNA by initiating RNA synthesis internally on antigenomic RNA. This sgRNA codes for structural proteins. Catalyzes the covalent attachment VPg with viral RNAs. Its function is as follows. Capsid protein VP60 self assembles to form an icosahedral capsid with a T=3 symmetry, about 35 nm in diameter, and consisting of 180 capsid proteins. A smaller form of capsid with a diameter of 23 nm might be capsid proteins assembled as icosahedron with T=1 symmetry. The capsid encapsulate VP2 proteins and genomic or subgenomic RNA. Attaches virion to target cells by binding histo-blood group antigens, inducing endocytosis of the viral particle. Acidification of the endosome induces conformational change of capsid protein thereby injecting virus genomic RNA into host cytoplasm. The sequence is that of Genome polyprotein from Oryctolagus cuniculus (Rabbit).